A 585-amino-acid chain; its full sequence is Eukaryotic translation initiation factor 3 subunit D (585 aa).

Residues 110-130 show a composition bias toward gly residues; sequence GGGTVFRGRGQRGVGQRGGRA. Positions 110–152 are disordered; sequence GGGTVFRGRGQRGVGQRGGRAGFQRVGAGRGQGGDRYYDNRSA. Residues 300–314 are RNA gate; the sequence is SIDLVTVNENAADAP. Residues 560–585 are disordered; the sequence is VPPNTFEEDDEAAEEQEEKAEDESEE. The span at 565–585 shows a compositional bias: acidic residues; the sequence is FEEDDEAAEEQEEKAEDESEE.

This sequence belongs to the eIF-3 subunit D family. Component of the eukaryotic translation initiation factor 3 (eIF-3) complex.

Its subcellular location is the cytoplasm. Functionally, mRNA cap-binding component of the eukaryotic translation initiation factor 3 (eIF-3) complex, which is involved in protein synthesis of a specialized repertoire of mRNAs and, together with other initiation factors, stimulates binding of mRNA and methionyl-tRNAi to the 40S ribosome. The eIF-3 complex specifically targets and initiates translation of a subset of mRNAs involved in cell proliferation. In the eIF-3 complex, eif3d specifically recognizes and binds the 7-methylguanosine cap of a subset of mRNAs. The polypeptide is Eukaryotic translation initiation factor 3 subunit D (Aspergillus fumigatus (strain CBS 144.89 / FGSC A1163 / CEA10) (Neosartorya fumigata)).